We begin with the raw amino-acid sequence, 557 residues long: 2-succinyl-5-enolpyruvyl-6-hydroxy-3-cyclohexene-1-carboxylate synthase (557 aa).

This sequence belongs to the TPP enzyme family. MenD subfamily. As to quaternary structure, homodimer. Requires Mg(2+) as cofactor. The cofactor is Mn(2+). Thiamine diphosphate serves as cofactor.

It catalyses the reaction isochorismate + 2-oxoglutarate + H(+) = 5-enolpyruvoyl-6-hydroxy-2-succinyl-cyclohex-3-ene-1-carboxylate + CO2. It participates in quinol/quinone metabolism; 1,4-dihydroxy-2-naphthoate biosynthesis; 1,4-dihydroxy-2-naphthoate from chorismate: step 2/7. The protein operates within quinol/quinone metabolism; menaquinone biosynthesis. Functionally, catalyzes the thiamine diphosphate-dependent decarboxylation of 2-oxoglutarate and the subsequent addition of the resulting succinic semialdehyde-thiamine pyrophosphate anion to isochorismate to yield 2-succinyl-5-enolpyruvyl-6-hydroxy-3-cyclohexene-1-carboxylate (SEPHCHC). The polypeptide is 2-succinyl-5-enolpyruvyl-6-hydroxy-3-cyclohexene-1-carboxylate synthase (Staphylococcus aureus (strain USA300)).